The following is a 273-amino-acid chain: tRNA pseudouridine synthase B (273 aa).

The active-site Nucleophile is the Asp-38.

The protein belongs to the pseudouridine synthase TruB family. Type 1 subfamily.

The enzyme catalyses uridine(55) in tRNA = pseudouridine(55) in tRNA. In terms of biological role, responsible for synthesis of pseudouridine from uracil-55 in the psi GC loop of transfer RNAs. This chain is tRNA pseudouridine synthase B, found in Campylobacter curvus (strain 525.92).